A 126-amino-acid polypeptide reads, in one-letter code: Fluoride-specific ion channel FluC 1 (126 aa).

A run of 3 helical transmembrane segments spans residues 37-57 (HWGT…VLAL), 67-87 (IALL…TFVV), and 98-118 (LLAA…AAAA). Na(+) is bound by residues G77 and S80.

It belongs to the fluoride channel Fluc/FEX (TC 1.A.43) family.

The protein resides in the cell inner membrane. The catalysed reaction is fluoride(in) = fluoride(out). Na(+) is not transported, but it plays an essential structural role and its presence is essential for fluoride channel function. Functionally, fluoride-specific ion channel. Important for reducing fluoride concentration in the cell, thus reducing its toxicity. The protein is Fluoride-specific ion channel FluC 1 of Parasynechococcus marenigrum (strain WH8102).